A 213-amino-acid chain; its full sequence is Peptidyl-tRNA hydrolase (213 aa).

TRNA is bound at residue Tyr26. Catalysis depends on His31, which acts as the Proton acceptor. TRNA is bound by residues Tyr78, Asn80, and Asn126.

It belongs to the PTH family. In terms of assembly, monomer.

The protein localises to the cytoplasm. The catalysed reaction is an N-acyl-L-alpha-aminoacyl-tRNA + H2O = an N-acyl-L-amino acid + a tRNA + H(+). Functionally, hydrolyzes ribosome-free peptidyl-tRNAs (with 1 or more amino acids incorporated), which drop off the ribosome during protein synthesis, or as a result of ribosome stalling. Its function is as follows. Catalyzes the release of premature peptidyl moieties from peptidyl-tRNA molecules trapped in stalled 50S ribosomal subunits, and thus maintains levels of free tRNAs and 50S ribosomes. This chain is Peptidyl-tRNA hydrolase, found in Nostoc punctiforme (strain ATCC 29133 / PCC 73102).